The primary structure comprises 351 residues: Prostaglandin reductase 2 (351 aa).

Position 99-100 (99-100) interacts with substrate; sequence FY. NADP(+)-binding positions include 165–168, lysine 192, tyrosine 208, asparagine 231, 253–259, 287–289, and asparagine 337; these read GACG, CGQISQY, and FLV. Residue 288–290 coordinates substrate; it reads LVL.

It belongs to the NADP-dependent oxidoreductase L4BD family. In terms of assembly, monomer.

The protein localises to the cytoplasm. It carries out the reaction 13,14-dihydro-15-oxo-prostaglandin E2 + NAD(+) = 15-oxoprostaglandin E2 + NADH + H(+). It catalyses the reaction 13,14-dihydro-15-oxo-prostaglandin E2 + NADP(+) = 15-oxoprostaglandin E2 + NADPH + H(+). The catalysed reaction is 13,14-dihydro-15-oxo-PGF2alpha + NADP(+) = 15-oxoprostaglandin F2alpha + NADPH + H(+). The enzyme catalyses 13,14-dihydro-15-oxo-prostaglandin E1 + NADP(+) = 15-oxoprostaglandin E1 + NADPH + H(+). It carries out the reaction 13,14-dihydro-15-oxo-prostaglandin F1alpha + NADP(+) = 15-oxoprostaglandin F1alpha + NADPH + H(+). Functionally, functions as 15-oxo-prostaglandin 13-reductase and acts on 15-keto-PGE1, 15-keto-PGE2, 15-keto-PGE1-alpha and 15-keto-PGE2-alpha with highest activity towards 15-keto-PGE2. Overexpression represses transcriptional activity of PPARG and inhibits adipocyte differentiation. This Bos taurus (Bovine) protein is Prostaglandin reductase 2 (PTGR2).